We begin with the raw amino-acid sequence, 508 residues long: Glutamate--cysteine ligase, chloroplastic (508 aa).

The transit peptide at methionine 1–valine 59 directs the protein to the chloroplast. Disulfide bonds link cysteine 172-cysteine 392 and cysteine 335-cysteine 350.

Belongs to the carboxylate-amine ligase family. Glutamate--cysteine ligase type 2 subfamily. As to quaternary structure, homodimer or monomer when oxidized or reduced, respectively. In terms of processing, the Cys-172-Cys-392 disulfide bridge is known to modulate the enzyme activity according to the redox status. The oxidized form constitutes the active enzyme.

It is found in the plastid. The protein localises to the chloroplast. The enzyme catalyses L-cysteine + L-glutamate + ATP = gamma-L-glutamyl-L-cysteine + ADP + phosphate + H(+). The protein operates within sulfur metabolism; glutathione biosynthesis; glutathione from L-cysteine and L-glutamate: step 1/2. The sequence is that of Glutamate--cysteine ligase, chloroplastic (GSH1) from Medicago truncatula (Barrel medic).